A 378-amino-acid polypeptide reads, in one-letter code: Circumsporozoite protein (378 aa).

A signal peptide spans 1-22 (MKNFNLLAVSSILLVDLFPTHC). The interval 50-291 (AQVRQSASRG…GQGQNNEGAN (242 aa)) is disordered. 2 stretches are compositionally biased toward basic and acidic residues: residues 66-92 (PKNE…ENKL) and 101-126 (ARAE…DGAR). The interval 80–88 (KKVEPKKPR) is required for the binding to heparan sulfate proteoglycans (HSPGs) on the surface of host hepatocytes. Residues 91 to 95 (KLKQP) are region I; contains the proteolytic cleavage site. 24 tandem repeats follow at residues 99–104 (DGARAE), 105–110 (DGARAE), 111–116 (DGARAE), 117–122 (DGARAE), 123–128 (DGARAA), 129–134 (DGARAA), 135–140 (DGARAA), 141–146 (DGARAE), 147–152 (DGARAE), 153–158 (DGARAE), 159–164 (DGARAA), 165–170 (DGARAA), 171–176 (DGARAA), 177–182 (DGARAA), 183–188 (DGARAA), 189–194 (DGARAA), 195–200 (DGARAA), 201–206 (DGARAE), 212–222 (GNREGGQAGAG), 223–233 (GNQAGGQAGAG), 234–244 (GNQAGGQAGAG), 245–255 (GNQAGGQAGAG), 256–266 (GNQAGGQAGAG), and 267–277 (GNRAGGQAGAG). The interval 99-206 (DGARAEDGAR…ARAADGARAE (108 aa)) is 18 X 6 AA tandem repeats of D-G-A-R-A-[EA]. Residues 127–140 (AADGARAADGARAA) are compositionally biased toward low complexity. Over residues 141–162 (DGARAEDGARAEDGARAEDGAR) the composition is skewed to basic and acidic residues. Low complexity predominate over residues 163–200 (AADGARAADGARAADGARAADGARAADGARAADGARAA). The tract at residues 212–277 (GNREGGQAGA…NRAGGQAGAG (66 aa)) is 6 X 11 AA tandem repeats of G-N-[QR]-[AE]-G-G-Q-A-G-A-G. Residues 214–283 (REGGQAGAGG…AGAGDAGAGQ (70 aa)) are compositionally biased toward gly residues. The TSP type-1 domain maps to 304-356 (KIRSTIGVEWSPCTVTCGKGVRMRRKVSAANKKPEELDVNDLETEVCTMDKCA). Cystine bridges form between cysteine 316-cysteine 350 and cysteine 320-cysteine 355. Threonine 319 carries an O-linked (Fuc) threonine glycan. Cysteine 355 is lipidated: GPI-anchor amidated cysteine. A propeptide spans 356 to 378 (AGIFNVVSNSLGLVILLVLALFN) (removed in mature form).

Belongs to the plasmodium circumsporozoite protein family. Post-translationally, during host cell invasion, proteolytically cleaved at the cell membrane in the region I by a papain-like cysteine protease of parasite origin. Cleavage is triggered by the sporozoite contact with highly sulfated heparan sulfate proteoglycans (HSPGs) present on the host hepatocyte cell surface. Cleavage exposes the TSP type-1 (TSR) domain and is required for productive invasion of host hepatocytes but not for adhesion to the host cell membrane. Cleavage is dispensable for sporozoite development in the oocyst, motility and for traversal of host and vector cells. O-glycosylated; maybe by POFUT2.

It is found in the cell membrane. The protein localises to the cytoplasm. Its function is as follows. Essential sporozoite protein. In the mosquito vector, required for sporozoite development in the oocyst, migration through the vector hemolymph and entry into the vector salivary glands. In the vertebrate host, required for sporozoite migration through the host dermis and infection of host hepatocytes. Binds to highly sulfated heparan sulfate proteoglycans (HSPGs) on the surface of host hepatocytes. In terms of biological role, in the vertebrate host, binds to highly sulfated heparan sulfate proteoglycans (HSPGs) on the surface of host hepatocytes and is required for sporozoite invasion of the host hepatocytes. The polypeptide is Circumsporozoite protein (Plasmodium cynomolgi (strain London)).